A 318-amino-acid chain; its full sequence is D-alanine--D-alanine ligase (318 aa).

The 196-residue stretch at 116–311 folds into the ATP-grasp domain; sequence KQVWQSLGIP…FQQLVLAILA (196 aa). 142–197 contributes to the ATP binding site; it reads STELGFPLIVKPAHEGSSIGMAKVNSAQELVAAWQDAAKYDSQVLVEQWIHGPEFT. Mg(2+)-binding residues include Asp265, Glu278, and Asn280.

The protein belongs to the D-alanine--D-alanine ligase family. Mg(2+) serves as cofactor. It depends on Mn(2+) as a cofactor.

It is found in the cytoplasm. It catalyses the reaction 2 D-alanine + ATP = D-alanyl-D-alanine + ADP + phosphate + H(+). It functions in the pathway cell wall biogenesis; peptidoglycan biosynthesis. Its function is as follows. Cell wall formation. The protein is D-alanine--D-alanine ligase of Pseudomonas putida (strain GB-1).